The chain runs to 1528 residues: Cell surface antigen I/II (1528 aa).

An N-terminal signal peptide occupies residues 1–50; that stretch reads MLQKCKLEGIIICNEKRLLGAAKVKSGRTLSGALLGTAILASGAGQKALA. Residues 50–156 are disordered; that stretch reads AEETSTTSTS…PEIKDDYSKQ (107 aa). The segment covering 51 to 68 has biased composition (low complexity); the sequence is EETSTTSTSGGDTAVVGT. Composition is skewed to polar residues over residues 83 to 97 and 124 to 133; these read NPSS…QARQ and TVSQDATVNK. Positions 142 to 154 are enriched in basic and acidic residues; sequence ANQKEPEIKDDYS. Ag I/II A repeat units lie at residues 161–235, 236–315, 316–396, and 397–478; these read QKAT…QQAN, SDSQ…QAGN, AANE…QSGN, and AANE…KKDL. Disordered regions lie at residues 840–951 and 1459–1480; these read VPKV…VEPV and SNTV…PKTT. The segment covering 855–879 has biased composition (basic and acidic residues); it reads TKPDEPTYEVEKELVDLPVEPKYEP. Over residues 1459-1468 the composition is skewed to polar residues; that stretch reads SNTVRTSTPE. Residues 1503–1507 carry the LPXTG sorting signal motif; it reads LPATG. T1506 carries the pentaglycyl murein peptidoglycan amidated threonine modification. A propeptide spans 1507 to 1528 (removed by sortase); the sequence is GDSSNAYLPLLGLVSLTAGFSC.

It belongs to the antigen I/II family.

The protein localises to the secreted. It localises to the cell wall. In Streptococcus downei (Streptococcus sobrinus), this protein is Cell surface antigen I/II.